We begin with the raw amino-acid sequence, 831 residues long: Translation initiation factor IF-2 (831 aa).

Residues 116 to 157 are disordered; the sequence is IEPLETDKEVEQKQQNTEENKVEVSAKIVQDDEDIPSQIPKK. Basic and acidic residues predominate over residues 117 to 139; sequence EPLETDKEVEQKQQNTEENKVEV. Residues 329 to 499 enclose the tr-type G domain; it reads TRAPVVTVMG…LLIAEMQDLK (171 aa). Positions 338–345 are G1; sequence GHVDHGKT. 338 to 345 provides a ligand contact to GTP; that stretch reads GHVDHGKT. The segment at 363 to 367 is G2; the sequence is GITQH. The G3 stretch occupies residues 385-388; sequence DTPG. Residues 385-389 and 439-442 contribute to the GTP site; these read DTPGH and NKID. Residues 439–442 form a G4 region; the sequence is NKID. The G5 stretch occupies residues 475 to 477; that stretch reads SAL.

Belongs to the TRAFAC class translation factor GTPase superfamily. Classic translation factor GTPase family. IF-2 subfamily.

The protein resides in the cytoplasm. Its function is as follows. One of the essential components for the initiation of protein synthesis. Protects formylmethionyl-tRNA from spontaneous hydrolysis and promotes its binding to the 30S ribosomal subunits. Also involved in the hydrolysis of GTP during the formation of the 70S ribosomal complex. In Rickettsia conorii (strain ATCC VR-613 / Malish 7), this protein is Translation initiation factor IF-2.